We begin with the raw amino-acid sequence, 326 residues long: tRNA-modifying protein YgfZ (326 aa).

2 residues coordinate folate: tryptophan 27 and tryptophan 189.

The protein belongs to the tRNA-modifying YgfZ family.

It is found in the cytoplasm. In terms of biological role, folate-binding protein involved in regulating the level of ATP-DnaA and in the modification of some tRNAs. It is probably a key factor in regulatory networks that act via tRNA modification, such as initiation of chromosomal replication. The polypeptide is tRNA-modifying protein YgfZ (Escherichia coli O6:H1 (strain CFT073 / ATCC 700928 / UPEC)).